The sequence spans 196 residues: FMN-dependent NADH:quinone oxidoreductase (196 aa).

Residues Ser-10, 16 to 18 (SQS), 93 to 96 (MYNF), and 137 to 140 (TRGG) each bind FMN.

The protein belongs to the azoreductase type 1 family. As to quaternary structure, homodimer. The cofactor is FMN.

The enzyme catalyses 2 a quinone + NADH + H(+) = 2 a 1,4-benzosemiquinone + NAD(+). It catalyses the reaction N,N-dimethyl-1,4-phenylenediamine + anthranilate + 2 NAD(+) = 2-(4-dimethylaminophenyl)diazenylbenzoate + 2 NADH + 2 H(+). Quinone reductase that provides resistance to thiol-specific stress caused by electrophilic quinones. Functionally, also exhibits azoreductase activity. Catalyzes the reductive cleavage of the azo bond in aromatic azo compounds to the corresponding amines. The polypeptide is FMN-dependent NADH:quinone oxidoreductase (Shewanella amazonensis (strain ATCC BAA-1098 / SB2B)).